We begin with the raw amino-acid sequence, 64 residues long: Large ribosomal subunit protein bL35 (64 aa).

The tract at residues 18-39 is disordered; that stretch reads GSGLVKHYPSNKHHKNTHKKEN. Residues 26-39 are compositionally biased toward basic residues; it reads PSNKHHKNTHKKEN.

Belongs to the bacterial ribosomal protein bL35 family.

The protein is Large ribosomal subunit protein bL35 of Symbiobacterium thermophilum (strain DSM 24528 / JCM 14929 / IAM 14863 / T).